Consider the following 288-residue polypeptide: Structure-specific endonuclease subunit SLX1 (288 aa).

In terms of domain architecture, GIY-YIG spans 7-90 (PFYGVYLLQS…QHPNMTRLIT (84 aa)).

Belongs to the SLX1 family. In terms of assembly, forms a heterodimer with SLX4. The cofactor is a divalent metal cation.

It localises to the nucleus. Functionally, catalytic subunit of the SLX1-SLX4 structure-specific endonuclease that resolves DNA secondary structures generated during DNA repair and recombination. Has endonuclease activity towards branched DNA substrates, introducing single-strand cuts in duplex DNA close to junctions with ss-DNA. The sequence is that of Structure-specific endonuclease subunit SLX1 from Yarrowia lipolytica (strain CLIB 122 / E 150) (Yeast).